Reading from the N-terminus, the 214-residue chain is Somatotropin-A (214 aa).

An N-terminal signal peptide occupies residues 1-25; it reads MATGFCSSFGLLVVLLLKNVADVGA. 2 disulfide bridges follow: cysteine 77–cysteine 187 and cysteine 204–cysteine 212.

This sequence belongs to the somatotropin/prolactin family.

The protein localises to the secreted. Growth hormone plays an important role in growth control. This chain is Somatotropin-A (gh-a), found in Xenopus laevis (African clawed frog).